Reading from the N-terminus, the 275-residue chain is Large ribosomal subunit protein uL2 (275 aa).

Residues 38–53 (SSKAGRNNNGRITTRH) are compositionally biased toward polar residues. Disordered stretches follow at residues 38-60 (SSKA…GHKQ) and 224-257 (AMNP…KGFR).

It belongs to the universal ribosomal protein uL2 family. As to quaternary structure, part of the 50S ribosomal subunit. Forms a bridge to the 30S subunit in the 70S ribosome.

One of the primary rRNA binding proteins. Required for association of the 30S and 50S subunits to form the 70S ribosome, for tRNA binding and peptide bond formation. It has been suggested to have peptidyltransferase activity; this is somewhat controversial. Makes several contacts with the 16S rRNA in the 70S ribosome. This is Large ribosomal subunit protein uL2 from Burkholderia pseudomallei (strain 1106a).